The following is an 871-amino-acid chain: Nonsense-mediated mRNA decay factor SMG8 (871 aa).

The disordered stretch occupies residues 541–596 (LDDMELPESLQQSYTSSEDSSEDDDDFAIQTASSEDSLSGSDSYARPGSRRDEFES). Low complexity predominate over residues 573 to 583 (SSEDSLSGSDS).

Belongs to the SMG8 family.

Involved in nonsense-mediated decay (NMD) of mRNAs containing premature stop codons. Probable component of kinase complex containing smg-1 and recruited to stalled ribosomes. The sequence is that of Nonsense-mediated mRNA decay factor SMG8 (smg-8) from Caenorhabditis briggsae.